Consider the following 201-residue polypeptide: Protamine-like protein 99C (201 aa).

Residues 93–143 form a disordered region; the sequence is GGQQSSCQRQSPSARLRESERRSSRSKTLCRSAKNRQRGKPKPQQSKRRLS. Over residues 94-104 the composition is skewed to polar residues; the sequence is GQQSSCQRQSP. The span at 125–143 shows a compositional bias: basic residues; the sequence is AKNRQRGKPKPQQSKRRLS.

The protein belongs to the UPF0771 family.

It localises to the nucleus. It is found in the chromosome. Functionally, regulates chromatin compaction in spermatid nuclei and is essential for male fertility. Functions in parallel with other chromatin-condensing proteins such as ProtA, ProtB and Mst77F. The chain is Protamine-like protein 99C from Drosophila melanogaster (Fruit fly).